A 171-amino-acid polypeptide reads, in one-letter code: S-ribosylhomocysteine lyase (171 aa).

Positions 54, 58, and 128 each coordinate Fe cation.

The protein belongs to the LuxS family. Homodimer. Requires Fe cation as cofactor.

It carries out the reaction S-(5-deoxy-D-ribos-5-yl)-L-homocysteine = (S)-4,5-dihydroxypentane-2,3-dione + L-homocysteine. Involved in the synthesis of autoinducer 2 (AI-2) which is secreted by bacteria and is used to communicate both the cell density and the metabolic potential of the environment. The regulation of gene expression in response to changes in cell density is called quorum sensing. Catalyzes the transformation of S-ribosylhomocysteine (RHC) to homocysteine (HC) and 4,5-dihydroxy-2,3-pentadione (DPD). This is S-ribosylhomocysteine lyase from Shigella boydii serotype 4 (strain Sb227).